The primary structure comprises 117 residues: Large ribosomal subunit protein uL18 (117 aa).

The protein belongs to the universal ribosomal protein uL18 family. Part of the 50S ribosomal subunit; part of the 5S rRNA/L5/L18/L25 subcomplex. Contacts the 5S and 23S rRNAs.

Its function is as follows. This is one of the proteins that bind and probably mediate the attachment of the 5S RNA into the large ribosomal subunit, where it forms part of the central protuberance. This chain is Large ribosomal subunit protein uL18, found in Colwellia psychrerythraea (strain 34H / ATCC BAA-681) (Vibrio psychroerythus).